A 400-amino-acid polypeptide reads, in one-letter code: S-adenosylmethionine synthase (400 aa).

His-15 contacts ATP. Asp-17 lines the Mg(2+) pocket. Glu-43 is a K(+) binding site. Residues Glu-56 and Gln-99 each contribute to the L-methionine site. The tract at residues 99-109 (QSLEIGAGVDT) is flexible loop. Residues 174-176 (DGK), Asp-254, 260-261 (RK), Ala-277, and Lys-281 contribute to the ATP site. L-methionine is bound at residue Asp-254. Lys-285 lines the L-methionine pocket.

Belongs to the AdoMet synthase family. Homotetramer; dimer of dimers. It depends on Mg(2+) as a cofactor. K(+) is required as a cofactor.

The protein resides in the cytoplasm. It catalyses the reaction L-methionine + ATP + H2O = S-adenosyl-L-methionine + phosphate + diphosphate. It functions in the pathway amino-acid biosynthesis; S-adenosyl-L-methionine biosynthesis; S-adenosyl-L-methionine from L-methionine: step 1/1. In terms of biological role, catalyzes the formation of S-adenosylmethionine (AdoMet) from methionine and ATP. The overall synthetic reaction is composed of two sequential steps, AdoMet formation and the subsequent tripolyphosphate hydrolysis which occurs prior to release of AdoMet from the enzyme. The protein is S-adenosylmethionine synthase of Corynebacterium kroppenstedtii (strain DSM 44385 / JCM 11950 / CIP 105744 / CCUG 35717).